The chain runs to 250 residues: 2,3-bisphosphoglycerate-dependent phosphoglycerate mutase (250 aa).

Residues 8-15, 21-22, Arg-60, 87-90, Lys-98, 114-115, and 183-184 each bind substrate; these read RHGESQWN, TG, ERHY, RR, and GN. His-9 serves as the catalytic Tele-phosphohistidine intermediate. Residue Glu-87 is the Proton donor/acceptor of the active site.

The protein belongs to the phosphoglycerate mutase family. BPG-dependent PGAM subfamily. As to quaternary structure, homodimer.

The catalysed reaction is (2R)-2-phosphoglycerate = (2R)-3-phosphoglycerate. It participates in carbohydrate degradation; glycolysis; pyruvate from D-glyceraldehyde 3-phosphate: step 3/5. Functionally, catalyzes the interconversion of 2-phosphoglycerate and 3-phosphoglycerate. The sequence is that of 2,3-bisphosphoglycerate-dependent phosphoglycerate mutase from Bordetella petrii (strain ATCC BAA-461 / DSM 12804 / CCUG 43448).